Reading from the N-terminus, the 221-residue chain is ATP phosphoribosyltransferase (221 aa).

The protein belongs to the ATP phosphoribosyltransferase family. Short subfamily. In terms of assembly, heteromultimer composed of HisG and HisZ subunits.

Its subcellular location is the cytoplasm. The catalysed reaction is 1-(5-phospho-beta-D-ribosyl)-ATP + diphosphate = 5-phospho-alpha-D-ribose 1-diphosphate + ATP. Its pathway is amino-acid biosynthesis; L-histidine biosynthesis; L-histidine from 5-phospho-alpha-D-ribose 1-diphosphate: step 1/9. Its function is as follows. Catalyzes the condensation of ATP and 5-phosphoribose 1-diphosphate to form N'-(5'-phosphoribosyl)-ATP (PR-ATP). Has a crucial role in the pathway because the rate of histidine biosynthesis seems to be controlled primarily by regulation of HisG enzymatic activity. The polypeptide is ATP phosphoribosyltransferase (Symbiobacterium thermophilum (strain DSM 24528 / JCM 14929 / IAM 14863 / T)).